A 285-amino-acid chain; its full sequence is ATP synthase gamma chain (285 aa).

It belongs to the ATPase gamma chain family. F-type ATPases have 2 components, CF(1) - the catalytic core - and CF(0) - the membrane proton channel. CF(1) has five subunits: alpha(3), beta(3), gamma(1), delta(1), epsilon(1). CF(0) has three main subunits: a, b and c.

It localises to the cell membrane. Its function is as follows. Produces ATP from ADP in the presence of a proton gradient across the membrane. The gamma chain is believed to be important in regulating ATPase activity and the flow of protons through the CF(0) complex. This is ATP synthase gamma chain from Geobacillus kaustophilus (strain HTA426).